Consider the following 564-residue polypeptide: Potassium-transporting ATPase potassium-binding subunit (564 aa).

10 consecutive transmembrane segments (helical) span residues 4–24 (HEIL…PFLG), 67–87 (TLAL…ILML), 135–155 (VGLT…LVAL), 179–199 (LYVL…QGVP), 258–278 (FEVA…GHYV), 286–306 (AILG…LWAE), 376–396 (IFGG…IAVF), 420–440 (LLVF…AIAA), 487–507 (LMIG…ILAI), and 528–548 (GPLF…LTFL).

Belongs to the KdpA family. The system is composed of three essential subunits: KdpA, KdpB and KdpC.

It is found in the cell inner membrane. In terms of biological role, part of the high-affinity ATP-driven potassium transport (or Kdp) system, which catalyzes the hydrolysis of ATP coupled with the electrogenic transport of potassium into the cytoplasm. This subunit binds the periplasmic potassium ions and delivers the ions to the membrane domain of KdpB through an intramembrane tunnel. This Pseudomonas aeruginosa (strain ATCC 15692 / DSM 22644 / CIP 104116 / JCM 14847 / LMG 12228 / 1C / PRS 101 / PAO1) protein is Potassium-transporting ATPase potassium-binding subunit.